We begin with the raw amino-acid sequence, 305 residues long: Autophagy-related protein 14 (305 aa).

Positions 34-147 (KMNLLILRQE…LDTLSHILAR (114 aa)) form a coiled coil.

Belongs to the ATG14 family. Component of the autophagy-specific VPS34 PI3-kinase complex I.

Its subcellular location is the preautophagosomal structure membrane. It is found in the vacuole membrane. Required for cytoplasm to vacuole transport (Cvt) and autophagy as a part of the autophagy-specific VPS34 PI3-kinase complex I. This complex is essential to recruit the ATG8-phosphatidylinositol conjugate and the ATG12-ATG5 conjugate to the pre-autophagosomal structure. ATG14 mediates the specific binding of the VPS34 PI3-kinase complex I to the preautophagosomal structure (PAS). This chain is Autophagy-related protein 14, found in Kluyveromyces marxianus (strain DMKU3-1042 / BCC 29191 / NBRC 104275) (Yeast).